The following is a 523-amino-acid chain: GMP synthase [glutamine-hydrolyzing] (523 aa).

Positions 18–208 constitute a Glutamine amidotransferase type-1 domain; the sequence is KILIVDFGGQ…LYNVCGAKGD (191 aa). The Nucleophile role is filled by Cys-95. Active-site residues include His-182 and Glu-184. The GMPS ATP-PPase domain maps to 209–398; it reads WNMKSFLAEA…LGLPDYLVHR (190 aa). Position 236–242 (236–242) interacts with ATP; sequence SGGVDSS.

As to quaternary structure, homodimer.

It catalyses the reaction XMP + L-glutamine + ATP + H2O = GMP + L-glutamate + AMP + diphosphate + 2 H(+). It participates in purine metabolism; GMP biosynthesis; GMP from XMP (L-Gln route): step 1/1. Functionally, catalyzes the synthesis of GMP from XMP. This Treponema denticola (strain ATCC 35405 / DSM 14222 / CIP 103919 / JCM 8153 / KCTC 15104) protein is GMP synthase [glutamine-hydrolyzing].